The following is a 230-amino-acid chain: Cytochrome c oxidase subunit 2 (230 aa).

Over 1–14 (MAHPTQLGFQDAAS) the chain is Mitochondrial intermembrane. The chain crosses the membrane as a helical span at residues 15 to 45 (PVMEELLHFHDHALMIVFLISALVLYVIITT). At 46–59 (VSTKLTNMYILDSQ) the chain is on the mitochondrial matrix side. The chain crosses the membrane as a helical span at residues 60–87 (EIEIVWTVLPALILILIALPSLRILYLM). Residues 88–230 (DEINDPHLTI…NWSTLMLKDA (143 aa)) are Mitochondrial intermembrane-facing. Cu cation-binding residues include H161, C196, E198, C200, H204, and M207. E198 contributes to the Mg(2+) binding site.

Belongs to the cytochrome c oxidase subunit 2 family. As to quaternary structure, component of the cytochrome c oxidase (complex IV, CIV), a multisubunit enzyme composed of 14 subunits. The complex is composed of a catalytic core of 3 subunits MT-CO1, MT-CO2 and MT-CO3, encoded in the mitochondrial DNA, and 11 supernumerary subunits COX4I, COX5A, COX5B, COX6A, COX6B, COX6C, COX7A, COX7B, COX7C, COX8 and NDUFA4, which are encoded in the nuclear genome. The complex exists as a monomer or a dimer and forms supercomplexes (SCs) in the inner mitochondrial membrane with NADH-ubiquinone oxidoreductase (complex I, CI) and ubiquinol-cytochrome c oxidoreductase (cytochrome b-c1 complex, complex III, CIII), resulting in different assemblies (supercomplex SCI(1)III(2)IV(1) and megacomplex MCI(2)III(2)IV(2)). Found in a complex with TMEM177, COA6, COX18, COX20, SCO1 and SCO2. Interacts with TMEM177 in a COX20-dependent manner. Interacts with COX20. Interacts with COX16. The cofactor is Cu cation.

Its subcellular location is the mitochondrion inner membrane. The catalysed reaction is 4 Fe(II)-[cytochrome c] + O2 + 8 H(+)(in) = 4 Fe(III)-[cytochrome c] + 2 H2O + 4 H(+)(out). In terms of biological role, component of the cytochrome c oxidase, the last enzyme in the mitochondrial electron transport chain which drives oxidative phosphorylation. The respiratory chain contains 3 multisubunit complexes succinate dehydrogenase (complex II, CII), ubiquinol-cytochrome c oxidoreductase (cytochrome b-c1 complex, complex III, CIII) and cytochrome c oxidase (complex IV, CIV), that cooperate to transfer electrons derived from NADH and succinate to molecular oxygen, creating an electrochemical gradient over the inner membrane that drives transmembrane transport and the ATP synthase. Cytochrome c oxidase is the component of the respiratory chain that catalyzes the reduction of oxygen to water. Electrons originating from reduced cytochrome c in the intermembrane space (IMS) are transferred via the dinuclear copper A center (CU(A)) of subunit 2 and heme A of subunit 1 to the active site in subunit 1, a binuclear center (BNC) formed by heme A3 and copper B (CU(B)). The BNC reduces molecular oxygen to 2 water molecules using 4 electrons from cytochrome c in the IMS and 4 protons from the mitochondrial matrix. This is Cytochrome c oxidase subunit 2 (mt-co2) from Formosania lacustris (Oriental stream loach).